Consider the following 344-residue polypeptide: Selenide, water dikinase (344 aa).

C16 is a catalytic residue. ATP is bound by residues K19 and 47–49 (SRD). D50 lines the Mg(2+) pocket. Residues D67, D90, and 138 to 140 (GHS) each bind ATP. D90 lines the Mg(2+) pocket. Residue D226 coordinates Mg(2+).

The protein belongs to the selenophosphate synthase 1 family. Class I subfamily. As to quaternary structure, homodimer. Mg(2+) serves as cofactor.

It catalyses the reaction hydrogenselenide + ATP + H2O = selenophosphate + AMP + phosphate + 2 H(+). Its function is as follows. Synthesizes selenophosphate from selenide and ATP. This is Selenide, water dikinase from Pseudomonas putida (strain ATCC 47054 / DSM 6125 / CFBP 8728 / NCIMB 11950 / KT2440).